Consider the following 338-residue polypeptide: Ketol-acid reductoisomerase (NADP(+)) (338 aa).

The KARI N-terminal Rossmann domain occupies 1 to 181 (MNVFYDKDAD…GGGRAGIIET (181 aa)). Residues 24–27 (YGSQ), arginine 47, and serine 52 each bind NADP(+). Histidine 107 is a catalytic residue. Glycine 133 is a binding site for NADP(+). The region spanning 182-327 (NFREETETDL…AKLRAMMPWI (146 aa)) is the KARI C-terminal knotted domain. The Mg(2+) site is built by aspartate 190, glutamate 194, glutamate 226, and glutamate 230. Serine 251 is a substrate binding site.

Belongs to the ketol-acid reductoisomerase family. The cofactor is Mg(2+).

It catalyses the reaction (2R)-2,3-dihydroxy-3-methylbutanoate + NADP(+) = (2S)-2-acetolactate + NADPH + H(+). It carries out the reaction (2R,3R)-2,3-dihydroxy-3-methylpentanoate + NADP(+) = (S)-2-ethyl-2-hydroxy-3-oxobutanoate + NADPH + H(+). It functions in the pathway amino-acid biosynthesis; L-isoleucine biosynthesis; L-isoleucine from 2-oxobutanoate: step 2/4. The protein operates within amino-acid biosynthesis; L-valine biosynthesis; L-valine from pyruvate: step 2/4. Its function is as follows. Involved in the biosynthesis of branched-chain amino acids (BCAA). Catalyzes an alkyl-migration followed by a ketol-acid reduction of (S)-2-acetolactate (S2AL) to yield (R)-2,3-dihydroxy-isovalerate. In the isomerase reaction, S2AL is rearranged via a Mg-dependent methyl migration to produce 3-hydroxy-3-methyl-2-ketobutyrate (HMKB). In the reductase reaction, this 2-ketoacid undergoes a metal-dependent reduction by NADPH to yield (R)-2,3-dihydroxy-isovalerate. In Burkholderia lata (strain ATCC 17760 / DSM 23089 / LMG 22485 / NCIMB 9086 / R18194 / 383), this protein is Ketol-acid reductoisomerase (NADP(+)).